The sequence spans 530 residues: Light-independent protochlorophyllide reductase subunit B (530 aa).

Aspartate 36 is a [4Fe-4S] cluster binding site. Residue aspartate 290 is the Proton donor of the active site. Position 425-426 (425-426 (GL)) interacts with substrate.

It belongs to the ChlB/BchB/BchZ family. As to quaternary structure, protochlorophyllide reductase is composed of three subunits; ChlL, ChlN and ChlB. Forms a heterotetramer of two ChlB and two ChlN subunits. [4Fe-4S] cluster is required as a cofactor.

The catalysed reaction is chlorophyllide a + oxidized 2[4Fe-4S]-[ferredoxin] + 2 ADP + 2 phosphate = protochlorophyllide a + reduced 2[4Fe-4S]-[ferredoxin] + 2 ATP + 2 H2O. It functions in the pathway porphyrin-containing compound metabolism; chlorophyll biosynthesis (light-independent). Functionally, component of the dark-operative protochlorophyllide reductase (DPOR) that uses Mg-ATP and reduced ferredoxin to reduce ring D of protochlorophyllide (Pchlide) to form chlorophyllide a (Chlide). This reaction is light-independent. The NB-protein (ChlN-ChlB) is the catalytic component of the complex. The chain is Light-independent protochlorophyllide reductase subunit B from Synechococcus sp. (strain WH7803).